The chain runs to 318 residues: Tyrosine recombinase XerC (318 aa).

Positions 17–108 (PEVMAERRRW…GLRSFLRYLE (92 aa)) constitute a Core-binding (CB) domain. In terms of domain architecture, Tyr recombinase spans 129–312 (SLPKALTDRE…DSARLLEIYD (184 aa)). Active-site residues include Arg172, Lys196, His264, Arg267, and His290. Tyr299 (O-(3'-phospho-DNA)-tyrosine intermediate) is an active-site residue.

It belongs to the 'phage' integrase family. XerC subfamily. As to quaternary structure, forms a cyclic heterotetrameric complex composed of two molecules of XerC and two molecules of XerD.

It is found in the cytoplasm. Site-specific tyrosine recombinase, which acts by catalyzing the cutting and rejoining of the recombining DNA molecules. The XerC-XerD complex is essential to convert dimers of the bacterial chromosome into monomers to permit their segregation at cell division. It also contributes to the segregational stability of plasmids. This Rhizobium meliloti (strain 1021) (Ensifer meliloti) protein is Tyrosine recombinase XerC.